Here is a 556-residue protein sequence, read N- to C-terminus: Methyltransferase/ribosomally synthesized type II borosin cyclic peptide precursor pgiMA1 (556 aa).

The tract at residues 1–250 (MSSASSDSNT…SCSTLYVPPL (250 aa)) is methyltransferase domain. Catalysis depends on residues arginine 74, tyrosine 78, and tyrosine 100. S-adenosyl-L-methionine contacts are provided by tyrosine 100, histidine 102, valine 105, glutamine 174, glycine 212, serine 243, and threonine 244. Residues 251-377 (THANKFSGNM…GAVFGVMKLR (127 aa)) form a clasp domain region. Residues 378-386 (ASEVANEQG) form a precursor leader region. Residues aspartate 421, aspartate 434, aspartate 447, aspartate 460, aspartate 473, aspartate 486, aspartate 499, aspartate 512, aspartate 525, and aspartate 538 each carry the N-methylaspartate modification. Residues 543–556 (AVPVPDHVAGIPCM) constitute a propeptide that is removed on maturation.

It in the N-terminal section; belongs to the precorrin methyltransferase family. In terms of assembly, homodimer. PgiMA1 automethylates at Asp-421, Asp-434, Asp-447, Asp-460, Asp-473, Asp-486, Asp-499, Asp-512, Asp-525 and Asp-538 before being processed, probably by the M64 family peptidase found in the genes surrounding PgiMA1, to release methylated peptides which then undergos macrocyclization with the N-terminus of the modified core peptides. Peptide backbone alpha-N-methylations change the physicochemical properties of amide bonds to provide structural constraints and other favorable characteristics including biological membrane permeability to peptides.

It functions in the pathway secondary metabolite biosynthesis. Fusion protein of the methyltransferase pgiM1 and 12 type II borosin core peptides; part of the gene cluster that mediates the biosynthesis of a type II borosin, a highly methylated cyclic peptide with potent biological activities. Type II borosins derive from the C-terminus of the fusion protein, and it is the same protein that methylates its own C-terminus using S-adenosyl methionine (SAM). The C-terminus is subsequently cleaved off and macrocyclized by a prolyloligopeptidase to give the final product. The chain is Methyltransferase/ribosomally synthesized type II borosin cyclic peptide precursor pgiMA1 from Phlebiopsis gigantea (strain 11061_1 CR5-6) (White-rot fungus).